Here is a 549-residue protein sequence, read N- to C-terminus: Chaperonin GroEL (549 aa).

ATP-binding positions include 30 to 33 (TLGP), Lys-51, 87 to 91 (DGTTT), Gly-415, and Asp-496.

The protein belongs to the chaperonin (HSP60) family. In terms of assembly, forms a cylinder of 14 subunits composed of two heptameric rings stacked back-to-back. Interacts with the co-chaperonin GroES.

It is found in the cytoplasm. It catalyses the reaction ATP + H2O + a folded polypeptide = ADP + phosphate + an unfolded polypeptide.. Together with its co-chaperonin GroES, plays an essential role in assisting protein folding. The GroEL-GroES system forms a nano-cage that allows encapsulation of the non-native substrate proteins and provides a physical environment optimized to promote and accelerate protein folding. In Acidiphilium cryptum (strain JF-5), this protein is Chaperonin GroEL.